The primary structure comprises 146 residues: MKYNREEFEEVIVNIGRVTKVVKGGRKFRFTALVVVGNRKGLVGYGFGKSKEVPDAIKKAVDDAFKNIIDVKLNGSTIAHDIEVKYNASKILLKPASEGTGVIAGGSVRPVLELVGIKDILTKSLGSNNSSNVVRATIKALSMLKN.

The S5 DRBM domain maps to 8–71 (FEEVIVNIGR…DDAFKNIIDV (64 aa)).

It belongs to the universal ribosomal protein uS5 family. In terms of assembly, part of the 30S ribosomal subunit. Contacts proteins S4 and S8.

With S4 and S12 plays an important role in translational accuracy. In terms of biological role, located at the back of the 30S subunit body where it stabilizes the conformation of the head with respect to the body. In Campylobacter hominis (strain ATCC BAA-381 / DSM 21671 / CCUG 45161 / LMG 19568 / NCTC 13146 / CH001A), this protein is Small ribosomal subunit protein uS5.